The sequence spans 296 residues: Transcription factor Pur-alpha 1 (296 aa).

N-acetylmethionine is present on methionine 1. Disordered regions lie at residues 1-25 (MEAN…GGGG) and 186-214 (IPGH…EETG). Serine 207 is modified (phosphoserine).

The protein belongs to the PUR DNA-binding protein family. As to quaternary structure, homodimer. Interacts with TCP20.

It localises to the nucleus. In terms of biological role, transcription factor that specifically binds the purine-rich double-stranded telomeric repeated sequence 5'-AAACCCTAA-3' found in promoter telo boxes. This Arabidopsis thaliana (Mouse-ear cress) protein is Transcription factor Pur-alpha 1 (PURA1).